A 433-amino-acid polypeptide reads, in one-letter code: Ribosomal protein uS12 methylthiotransferase RimO (433 aa).

Positions Gln-6–Arg-122 constitute an MTTase N-terminal domain. [4Fe-4S] cluster contacts are provided by Cys-15, Cys-51, Cys-85, Cys-146, Cys-150, and Cys-153. The region spanning Leu-132–Glu-362 is the Radical SAM core domain. Residues Arg-365–Asp-432 form the TRAM domain.

Belongs to the methylthiotransferase family. RimO subfamily. It depends on [4Fe-4S] cluster as a cofactor.

It is found in the cytoplasm. The catalysed reaction is L-aspartate(89)-[ribosomal protein uS12]-hydrogen + (sulfur carrier)-SH + AH2 + 2 S-adenosyl-L-methionine = 3-methylsulfanyl-L-aspartate(89)-[ribosomal protein uS12]-hydrogen + (sulfur carrier)-H + 5'-deoxyadenosine + L-methionine + A + S-adenosyl-L-homocysteine + 2 H(+). Its function is as follows. Catalyzes the methylthiolation of an aspartic acid residue of ribosomal protein uS12. The polypeptide is Ribosomal protein uS12 methylthiotransferase RimO (Prosthecochloris aestuarii (strain DSM 271 / SK 413)).